The primary structure comprises 228 residues: Aquaporin Z 1 (228 aa).

Transmembrane regions (helical) follow at residues 9–29 (FLGTFWLVLGGCGSAVLAAAF) and 34–54 (IGLLGVSFAFGLTVLTMAYAV). The NPA 1 signature appears at 63-65 (NPA). The next 3 membrane-spanning stretches (helical) occupy residues 82–102 (VGYILAQVTGAIAAAAVLYVI), 129–149 (LTAALVTEVVMTAFFLLIILG), and 156–176 (PVGFAPIAIGLGLTLIHLVSI). Positions 184–186 (NPA) match the NPA 2 motif. The chain crosses the membrane as a helical span at residues 204–224 (WLFWVAPLIGAVIAGIVWKIV).

It belongs to the MIP/aquaporin (TC 1.A.8) family. As to quaternary structure, homotetramer.

It localises to the cell inner membrane. The catalysed reaction is H2O(in) = H2O(out). In terms of biological role, channel that permits osmotically driven movement of water in both directions. It is involved in the osmoregulation and in the maintenance of cell turgor during volume expansion in rapidly growing cells. It mediates rapid entry or exit of water in response to abrupt changes in osmolarity. This chain is Aquaporin Z 1, found in Rhizobium meliloti (strain 1021) (Ensifer meliloti).